Consider the following 228-residue polypeptide: MPAFFVTGTDTEIGKTTIAAGLLHAARSAGLSTAAAKPVASGCEATAQGLRNGDALALLGECSLALAYEQVNPLAFEPAIAPHLAAREAGVELSAARLHDAVREVLALRADFTLVEGAGGWRVPLQGRENLSDLARLLGLPVVLVVGVRLGCINHALLSAEAILGDGLALAGWVANIVDPATSRLEENLATLAERLPAPCLGRVPRLADAGPAAVAAHLDLRPLGIGL.

ATP is bound at residue 12–17 (EIGKTT). Threonine 16 serves as a coordination point for Mg(2+). Lysine 37 is a catalytic residue. Substrate is bound at residue serine 41. ATP-binding positions include aspartate 54, 116 to 119 (EGAG), and 205 to 207 (PRL). Residues aspartate 54 and glutamate 116 each contribute to the Mg(2+) site.

It belongs to the dethiobiotin synthetase family. Homodimer. Mg(2+) serves as cofactor.

The protein localises to the cytoplasm. It catalyses the reaction (7R,8S)-7,8-diammoniononanoate + CO2 + ATP = (4R,5S)-dethiobiotin + ADP + phosphate + 3 H(+). It functions in the pathway cofactor biosynthesis; biotin biosynthesis; biotin from 7,8-diaminononanoate: step 1/2. Catalyzes a mechanistically unusual reaction, the ATP-dependent insertion of CO2 between the N7 and N8 nitrogen atoms of 7,8-diaminopelargonic acid (DAPA, also called 7,8-diammoniononanoate) to form a ureido ring. The protein is ATP-dependent dethiobiotin synthetase BioD of Pseudomonas paraeruginosa (strain DSM 24068 / PA7) (Pseudomonas aeruginosa (strain PA7)).